Here is a 767-residue protein sequence, read N- to C-terminus: Syn-copalyl diphosphate synthase, chloroplastic (767 aa).

The N-terminal 47 residues, 1-47 (MPVFTASFQCVTLFGQPASAADAQPLLQGQRPFLHLHARRRRPCGPM), are a transit peptide targeting the chloroplast. Positions 45–74 (GPMLISKSPPYPASEETREWEADGQHEHTD) are disordered. The segment covering 59–74 (EETREWEADGQHEHTD) has biased composition (basic and acidic residues). Lys233 provides a ligand contact to substrate. Residues Asp365 and Asp367 each contribute to the Mg(2+) site. Positions 365-368 (DIDD) match the DXDD motif motif. Lys453 contacts substrate.

It belongs to the terpene synthase family. Mg(2+) serves as cofactor.

The protein localises to the plastid. It localises to the chloroplast. The enzyme catalyses (2E,6E,10E)-geranylgeranyl diphosphate = 9alpha-copalyl diphosphate. Functionally, catalyzes the conversion of geranylgeranyl diphosphate to the phytoalexin precursor syn-copalyl diphosphate. Required for the biosynthesis of momilactones that exude from roots and act as allelochemicals against lowland weeds in paddy soil. The sequence is that of Syn-copalyl diphosphate synthase, chloroplastic from Oryza sativa subsp. japonica (Rice).